Consider the following 248-residue polypeptide: Probable phosphatase VF_A0065 (248 aa).

Zn(2+) contacts are provided by histidine 8, histidine 10, histidine 16, histidine 41, glutamate 74, histidine 102, histidine 132, aspartate 194, and histidine 196.

The protein belongs to the PHP family. Zn(2+) serves as cofactor.

The protein is Probable phosphatase VF_A0065 of Aliivibrio fischeri (strain ATCC 700601 / ES114) (Vibrio fischeri).